The following is a 726-amino-acid chain: L-lysine 6-oxidase (726 aa).

A cross-link (4'-cysteinyl-tryptophylquinone (Cys-Trp)) is located at residues 516–581; the sequence is CTIQTVNFSE…LPPAYYSYWW (66 aa). Trp581 bears the Tryptophylquinone mark.

Homotetramer. Requires cysteine tryptophylquinone residue as cofactor. Post-translationally, the cysteine tryptophylquinone (CTQ) is generated by oxidation of the indole ring of a tryptophan residue to form tryptophylquinone, followed by covalent cross-linking with a cysteine residue.

Its subcellular location is the secreted. It carries out the reaction L-lysine + O2 + H2O = (S)-2-amino-6-oxohexanoate + H2O2 + NH4(+). With respect to regulation, inhibited by aminoguanidine, amiloride and beta-aminopropionitrile. Its function is as follows. Has antibacterial activity against a wide spectrum of Gram-positive and Gram-negative bacteria including nosocomial isolates of S.aureus and Pseudomonas sp. The antimicrobial activity is due to hydrogen peroxide generated by its lysine oxidase activity. Also has autotoxic activity. Involved in biofilm differentiation; responsible for cell death within microcolonies during biofilm development which is linked to the generation of a phenotypically diverse dispersal population and thus may play a role in colonization. The chain is L-lysine 6-oxidase (lodA) from Marinomonas mediterranea (strain ATCC 700492 / JCM 21426 / NBRC 103028 / MMB-1).